Here is a 125-residue protein sequence, read N- to C-terminus: MSFLRPTLALLAVTALVTTSGQLNGYSKKEVTPEDTELLQKAQSNVSAYNSDVTSRICYLKVDSLETQVVSGENYKFHVSGCSVNSDKELGGCANQNCESSKYDIVIYSQSWTNTLKVTSITPAN.

The signal sequence occupies residues M1 to G21. N45 is a glycosylation site (N-linked (GlcNAc...) asparagine). Positions Q68–G72 match the Secondary area of contact motif.

It belongs to the cystatin family. Interacts with the host papain-like cysteine protease PIP1. Interacts with the host papain-like cysteine protease RCR3. Interacts with the host papain-like cysteine protease C14.

The protein localises to the secreted. Functionally, secreted effector that interacts with and inhibits the pathogenesis-related papain-like cysteine proteases C14, PIP1 and RCR3 of host plants. Inhibition of host proteases by a pathogen extracellular protease inhibitor forms a specific type of defense-counterdefense mechanism between plants and microbial pathogens. This chain is Cystatin-like cysteine protease inhibitor EPIC2B, found in Phytophthora infestans (Potato late blight agent).